Consider the following 96-residue polypeptide: Small, acid-soluble spore protein gamma-type (96 aa).

The span at 1–15 (MNTKNFTPQESRTNA) shows a compositional bias: polar residues. A disordered region spans residues 1 to 96 (MNTKNFTPQE…SEAKKRNNQQ (96 aa)). Residues 16-27 (QQVRQQNQQSAQ) are compositionally biased toward low complexity. The segment covering 28–41 (GTSSGFATEFASET) has biased composition (polar residues). Repeats lie at residues 28 to 52 (GTSS…QNQQ) and 61 to 87 (GATA…NQQS). Low complexity-rich tracts occupy residues 42–57 (NAQQ…AQAN) and 76–86 (NVQQVRQQNQQ).

This sequence belongs to the gamma-type SASP family.

SASP are proteins degraded in the first minutes of spore germination and provide amino acids for both new protein synthesis and metabolism. These proteins may be involved in dormant spore's high resistance to UV light. The polypeptide is Small, acid-soluble spore protein gamma-type (Laceyella sacchari (Thermoactinomyces thalpophilus)).